The sequence spans 381 residues: 4-hydroxyphenylpyruvate dioxygenase (381 aa).

VOC domains lie at 22–156 and 184–338; these read GMDA…LVER and AVDH…IFTK. Residues H187, H270, and E349 each coordinate Fe cation.

The protein belongs to the 4HPPD family. In terms of assembly, homodimer. Requires Fe cation as cofactor.

The catalysed reaction is 3-(4-hydroxyphenyl)pyruvate + O2 = homogentisate + CO2. It participates in amino-acid degradation; L-phenylalanine degradation; acetoacetate and fumarate from L-phenylalanine: step 3/6. In Streptomyces coelicolor (strain ATCC BAA-471 / A3(2) / M145), this protein is 4-hydroxyphenylpyruvate dioxygenase (hpd).